Consider the following 478-residue polypeptide: D-ribulose kinase (478 aa).

A chloroplast-targeting transit peptide spans Met-1–Tyr-38. Residues Asp-60, Ser-64–Arg-67, and Asp-278 each bind substrate. ATP-binding positions include Ser-300, Gly-338, and Gly-433 to Asn-437.

It belongs to the FGGY kinase family. Requires a divalent metal cation as cofactor.

It is found in the plastid. The protein localises to the chloroplast. The catalysed reaction is D-ribulose + ATP = D-ribulose 5-phosphate + ADP + H(+). Exhibits ATP hydrolysis without substrate. Can phosphorylate D-ribulose with low efficiency. In Arabidopsis thaliana (Mouse-ear cress), this protein is D-ribulose kinase.